Consider the following 267-residue polypeptide: Trehalose-phosphate phosphatase (267 aa).

D20 (nucleophile) is an active-site residue. Mg(2+) contacts are provided by D20, D22, and D198. 20–22 (DLD) is a binding site for substrate.

Belongs to the trehalose phosphatase family. It depends on Mg(2+) as a cofactor.

It carries out the reaction alpha,alpha-trehalose 6-phosphate + H2O = alpha,alpha-trehalose + phosphate. Its pathway is glycan biosynthesis; trehalose biosynthesis. In terms of biological role, removes the phosphate from trehalose 6-phosphate to produce free trehalose. The chain is Trehalose-phosphate phosphatase (otsB) from Salmonella typhimurium (strain SL1344).